The following is a 234-amino-acid chain: Proteasome subunit alpha type-2 (234 aa).

A2 carries the N-acetylalanine modification. Y6 is subject to Phosphotyrosine. Residues S7, S14, and S16 each carry the phosphoserine modification. Y24 is modified (phosphotyrosine). N6-acetyllysine is present on K70. 2 positions are modified to phosphotyrosine: Y76 and Y121. K171 bears the N6-acetyllysine mark.

Belongs to the peptidase T1A family. As to quaternary structure, the 26S proteasome consists of a 20S proteasome core and two 19S regulatory subunits. The 20S proteasome core is a barrel-shaped complex made of 28 subunits that are arranged in four stacked rings. The two outer rings are each formed by seven alpha subunits, and the two inner rings are formed by seven beta subunits. The proteolytic activity is exerted by three beta-subunits PSMB5, PSMB6 and PSMB7. In terms of processing, phosphorylated on tyrosine residues; which may be important for nuclear import. Detected in liver (at protein level).

It is found in the cytoplasm. The protein localises to the nucleus. Its function is as follows. Component of the 20S core proteasome complex involved in the proteolytic degradation of most intracellular proteins. This complex plays numerous essential roles within the cell by associating with different regulatory particles. Associated with two 19S regulatory particles, forms the 26S proteasome and thus participates in the ATP-dependent degradation of ubiquitinated proteins. The 26S proteasome plays a key role in the maintenance of protein homeostasis by removing misfolded or damaged proteins that could impair cellular functions, and by removing proteins whose functions are no longer required. Associated with the PA200 or PA28, the 20S proteasome mediates ubiquitin-independent protein degradation. This type of proteolysis is required in several pathways including spermatogenesis (20S-PA200 complex) or generation of a subset of MHC class I-presented antigenic peptides (20S-PA28 complex). This is Proteasome subunit alpha type-2 (Psma2) from Mus musculus (Mouse).